A 316-amino-acid chain; its full sequence is Spermidine synthase (316 aa).

In terms of domain architecture, PABS spans 25–262 (PGWFSEISPM…GVIGFMLCST (238 aa)). Position 56 (Gln-56) interacts with S-adenosyl 3-(methylsulfanyl)propylamine. Tyr-86 contributes to the putrescine binding site. Residues Gln-87, Asp-111, Glu-131, 162–163 (DG), and Asp-181 each bind S-adenosyl 3-(methylsulfanyl)propylamine. The active-site Proton acceptor is the Asp-181. Putrescine contacts are provided by residues 181–184 (DSSD) and Tyr-250.

This sequence belongs to the spermidine/spermine synthase family.

It carries out the reaction S-adenosyl 3-(methylsulfanyl)propylamine + putrescine = S-methyl-5'-thioadenosine + spermidine + H(+). The protein operates within amine and polyamine biosynthesis; spermidine biosynthesis; spermidine from putrescine: step 1/1. This chain is Spermidine synthase, found in Coffea arabica (Arabian coffee).